The sequence spans 428 residues: Phosphomethylpyrimidine synthase 2 (428 aa).

Substrate-binding positions include methionine 94, tyrosine 123, histidine 162, 184-186 (SRG), 225-228 (NGMR), and glutamate 264. Zn(2+) is bound at residue histidine 268. Tyrosine 291 lines the substrate pocket. Histidine 332 serves as a coordination point for Zn(2+). [4Fe-4S] cluster is bound by residues cysteine 408, cysteine 411, and cysteine 415.

Belongs to the ThiC family. Requires [4Fe-4S] cluster as cofactor.

It catalyses the reaction 5-amino-1-(5-phospho-beta-D-ribosyl)imidazole + S-adenosyl-L-methionine = 4-amino-2-methyl-5-(phosphooxymethyl)pyrimidine + CO + 5'-deoxyadenosine + formate + L-methionine + 3 H(+). It functions in the pathway cofactor biosynthesis; thiamine diphosphate biosynthesis. Catalyzes the synthesis of the hydroxymethylpyrimidine phosphate (HMP-P) moiety of thiamine from aminoimidazole ribotide (AIR) in a radical S-adenosyl-L-methionine (SAM)-dependent reaction. The polypeptide is Phosphomethylpyrimidine synthase 2 (Methanosarcina acetivorans (strain ATCC 35395 / DSM 2834 / JCM 12185 / C2A)).